A 143-amino-acid polypeptide reads, in one-letter code: uncharacterized protein (143 aa).

The N-terminal stretch at 1–16 (MSRNRLFLVAGSLAVA) is a signal peptide. Residues 114–134 (GAYVFLGPGFTPGSPSGGSGG) form a helical membrane-spanning segment.

The protein localises to the membrane. This is an uncharacterized protein from Mycobacterium tuberculosis (strain CDC 1551 / Oshkosh).